The sequence spans 254 residues: MTLLEVNNLGKHYNGDTKVLKNVNFEIGSGEFVSIIGPSGAGKSTLLRCINRMVEISEGSVFVDGQSVGDMKKKSLRTLRTNIGMIFQHYNLVPRLTVIENVLHGRFGYKTNLQGIFGRFTEKEKEKAFELLDRLGIADHAYKRCDQLSGGQQQRVGICRALIQDPKIILCDEPIASLDPNSSKIIMDYLKRITNELGITCLVNLHQVEVAKEYADRIIGLKSGEIVFDGPSNMLYQDKIESIYGFQQRELITV.

Positions 4-248 (LEVNNLGKHY…KIESIYGFQQ (245 aa)) constitute an ABC transporter domain. Position 37 to 44 (37 to 44 (GPSGAGKS)) interacts with ATP.

Belongs to the ABC transporter superfamily. Phosphonates importer (TC 3.A.1.9.1) family. The complex is composed of two ATP-binding proteins (PhnC), two transmembrane proteins (PhnE) and a solute-binding protein (PhnD).

It localises to the cell membrane. The catalysed reaction is phosphonate(out) + ATP + H2O = phosphonate(in) + ADP + phosphate + H(+). Part of the ABC transporter complex PhnCDE involved in phosphonates import. Responsible for energy coupling to the transport system. This is Phosphonates import ATP-binding protein PhnC 2 from Oceanobacillus iheyensis (strain DSM 14371 / CIP 107618 / JCM 11309 / KCTC 3954 / HTE831).